Here is a 372-residue protein sequence, read N- to C-terminus: Tyrosine--tRNA ligase (372 aa).

L-tyrosine-binding residues include Y37, Y169, Q173, D176, and Q191. Residues 246–250 carry the 'KMSKS' region motif; that stretch reads KMSKS. K249 serves as a coordination point for ATP.

This sequence belongs to the class-I aminoacyl-tRNA synthetase family. TyrS type 4 subfamily. As to quaternary structure, homodimer.

The protein localises to the cytoplasm. It carries out the reaction tRNA(Tyr) + L-tyrosine + ATP = L-tyrosyl-tRNA(Tyr) + AMP + diphosphate + H(+). Functionally, catalyzes the attachment of tyrosine to tRNA(Tyr) in a two-step reaction: tyrosine is first activated by ATP to form Tyr-AMP and then transferred to the acceptor end of tRNA(Tyr). This chain is Tyrosine--tRNA ligase, found in Pyrobaculum calidifontis (strain DSM 21063 / JCM 11548 / VA1).